A 179-amino-acid chain; its full sequence is Ubiquitin-conjugating enzyme E2 C (179 aa).

A disordered region spans residues 1-31 (MASQNRDPAATSVAAARKGAEPSGGAARGPV). Ala-2 carries the N-acetylalanine modification. Position 3 is a phosphoserine (Ser-3). The UBC core domain maps to 30–175 (PVGKRLQQEL…LQETYSKQVT (146 aa)). Residue Cys-114 is the Glycyl thioester intermediate of the active site.

This sequence belongs to the ubiquitin-conjugating enzyme family. Component of the APC/C complex, composed of at least 14 distinct subunits that assemble into a complex of at least 19 chains with a combined molecular mass of around 1.2 MDa. Within this complex, directly interacts with ANAPC2. In terms of processing, autoubiquitinated by the APC/C complex, leading to its degradation by the proteasome. Its degradation plays a central role in APC/C regulation, allowing cyclin-A accumulation before S phase entry. APC/C substrates inhibit the autoubiquitination of UBE2C/UBCH10 but not its E2 function, hence APC/C remaining active until its substrates have been destroyed.

The catalysed reaction is S-ubiquitinyl-[E1 ubiquitin-activating enzyme]-L-cysteine + [E2 ubiquitin-conjugating enzyme]-L-cysteine = [E1 ubiquitin-activating enzyme]-L-cysteine + S-ubiquitinyl-[E2 ubiquitin-conjugating enzyme]-L-cysteine.. It catalyses the reaction S-ubiquitinyl-[E1 ubiquitin-activating enzyme]-L-cysteine + [acceptor protein]-L-lysine = [E1 ubiquitin-activating enzyme]-L-cysteine + N(6)-monoubiquitinyl-[acceptor protein]-L-lysine.. Its pathway is protein modification; protein ubiquitination. In terms of biological role, accepts ubiquitin from the E1 complex and catalyzes its covalent attachment to other proteins. In vitro catalyzes 'Lys-11'- and 'Lys-48'-linked polyubiquitination. Acts as an essential factor of the anaphase promoting complex/cyclosome (APC/C), a cell cycle-regulated ubiquitin ligase that controls progression through mitosis. Acts by initiating 'Lys-11'-linked polyubiquitin chains on APC/C substrates, leading to the degradation of APC/C substrates by the proteasome and promoting mitotic exit. The polypeptide is Ubiquitin-conjugating enzyme E2 C (UBE2C) (Homo sapiens (Human)).